Here is a 210-residue protein sequence, read N- to C-terminus: LexA repressor (210 aa).

A DNA-binding region (H-T-H motif) is located at residues 25 to 44 (AGQVAQEVGITKQAISQQVN). Residues S120 and K159 each act as for autocatalytic cleavage activity in the active site.

It belongs to the peptidase S24 family. As to quaternary structure, homodimer.

The catalysed reaction is Hydrolysis of Ala-|-Gly bond in repressor LexA.. Functionally, represses a number of genes involved in the response to DNA damage (SOS response), including recA and lexA. In the presence of single-stranded DNA, RecA interacts with LexA causing an autocatalytic cleavage which disrupts the DNA-binding part of LexA, leading to derepression of the SOS regulon and eventually DNA repair. The chain is LexA repressor from Deinococcus radiodurans (strain ATCC 13939 / DSM 20539 / JCM 16871 / CCUG 27074 / LMG 4051 / NBRC 15346 / NCIMB 9279 / VKM B-1422 / R1).